A 259-amino-acid chain; its full sequence is Ubiquinone/menaquinone biosynthesis C-methyltransferase UbiE (259 aa).

S-adenosyl-L-methionine is bound by residues Thr-82, Asp-103, 131–132 (NA), and Ser-148.

This sequence belongs to the class I-like SAM-binding methyltransferase superfamily. MenG/UbiE family.

The catalysed reaction is a 2-demethylmenaquinol + S-adenosyl-L-methionine = a menaquinol + S-adenosyl-L-homocysteine + H(+). It carries out the reaction a 2-methoxy-6-(all-trans-polyprenyl)benzene-1,4-diol + S-adenosyl-L-methionine = a 5-methoxy-2-methyl-3-(all-trans-polyprenyl)benzene-1,4-diol + S-adenosyl-L-homocysteine + H(+). Its pathway is quinol/quinone metabolism; menaquinone biosynthesis; menaquinol from 1,4-dihydroxy-2-naphthoate: step 2/2. The protein operates within cofactor biosynthesis; ubiquinone biosynthesis. Its function is as follows. Methyltransferase required for the conversion of demethylmenaquinol (DMKH2) to menaquinol (MKH2) and the conversion of 2-polyprenyl-6-methoxy-1,4-benzoquinol (DDMQH2) to 2-polyprenyl-3-methyl-6-methoxy-1,4-benzoquinol (DMQH2). This chain is Ubiquinone/menaquinone biosynthesis C-methyltransferase UbiE, found in Vibrio campbellii (strain ATCC BAA-1116).